The sequence spans 140 residues: NADH-quinone oxidoreductase subunit I (140 aa).

2 4Fe-4S ferredoxin-type domains span residues 42 to 71 and 81 to 110; these read GSFT…VGSI and ASYE…FNQE. Cys51, Cys54, Cys57, Cys61, Cys90, Cys93, Cys96, and Cys100 together coordinate [4Fe-4S] cluster.

It belongs to the complex I 23 kDa subunit family. As to quaternary structure, NDH-1 is composed of 14 different subunits. Subunits NuoA, H, J, K, L, M, N constitute the membrane sector of the complex. Requires [4Fe-4S] cluster as cofactor.

It is found in the cell membrane. It catalyses the reaction a quinone + NADH + 5 H(+)(in) = a quinol + NAD(+) + 4 H(+)(out). In terms of biological role, NDH-1 shuttles electrons from NADH, via FMN and iron-sulfur (Fe-S) centers, to quinones in the respiratory chain. The immediate electron acceptor for the enzyme in this species is believed to be ubiquinone. Couples the redox reaction to proton translocation (for every two electrons transferred, four hydrogen ions are translocated across the cytoplasmic membrane), and thus conserves the redox energy in a proton gradient. The sequence is that of NADH-quinone oxidoreductase subunit I from Carboxydothermus hydrogenoformans (strain ATCC BAA-161 / DSM 6008 / Z-2901).